The primary structure comprises 158 residues: Small ribosomal subunit protein uS17 (158 aa).

The residue at position 2 (Ala2) is an N-acetylalanine. Position 22 is a citrulline (Arg22). Residues Lys38, Lys45, and Lys58 each carry the N6-acetyllysine modification. The S-palmitoyl cysteine moiety is linked to residue Cys60. Residue Ser67 is modified to Phosphoserine. Arg69 bears the Omega-N-methylarginine mark. Position 110 is a phosphoserine (Ser110).

This sequence belongs to the universal ribosomal protein uS17 family. In terms of assembly, component of the small ribosomal subunit. Part of the small subunit (SSU) processome, composed of more than 70 proteins and the RNA chaperone small nucleolar RNA (snoRNA) U3. In terms of processing, citrullinated by PADI4.

It localises to the cytoplasm. Its subcellular location is the nucleus. The protein localises to the nucleolus. In terms of biological role, component of the small ribosomal subunit. The ribosome is a large ribonucleoprotein complex responsible for the synthesis of proteins in the cell. Part of the small subunit (SSU) processome, first precursor of the small eukaryotic ribosomal subunit. During the assembly of the SSU processome in the nucleolus, many ribosome biogenesis factors, an RNA chaperone and ribosomal proteins associate with the nascent pre-rRNA and work in concert to generate RNA folding, modifications, rearrangements and cleavage as well as targeted degradation of pre-ribosomal RNA by the RNA exosome. This is Small ribosomal subunit protein uS17 (Rps11) from Mus musculus (Mouse).